The chain runs to 1128 residues: Nck-associated protein 1 (1128 aa).

A disordered region spans residues 640 to 665 (AVNKKSKKQTGKKGEPEREKPGVESM). Residues 651–665 (KKGEPEREKPGVESM) show a composition bias toward basic and acidic residues. The chain crosses the membrane as a helical span at residues 995–1015 (IACLLMVFVAVSLPTLASNVM).

Belongs to the HEM-1/HEM-2 family.

The protein localises to the cell membrane. It localises to the cell projection. Its subcellular location is the lamellipodium membrane. Part of the WAVE complex that regulates lamellipodia formation. The WAVE complex regulates actin filament reorganization via its interaction with the Arp2/3 complex. Actin remodeling activity is regulated by RAC1. Plays a role in neural tube closure. This is Nck-associated protein 1 (nckap1) from Xenopus laevis (African clawed frog).